A 407-amino-acid polypeptide reads, in one-letter code: Phosphopentomutase (407 aa).

Residues Asp11, Asp305, His310, Asp346, His347, and His358 each coordinate Mn(2+).

The protein belongs to the phosphopentomutase family. Mn(2+) is required as a cofactor.

The protein resides in the cytoplasm. It catalyses the reaction 2-deoxy-alpha-D-ribose 1-phosphate = 2-deoxy-D-ribose 5-phosphate. The catalysed reaction is alpha-D-ribose 1-phosphate = D-ribose 5-phosphate. It participates in carbohydrate degradation; 2-deoxy-D-ribose 1-phosphate degradation; D-glyceraldehyde 3-phosphate and acetaldehyde from 2-deoxy-alpha-D-ribose 1-phosphate: step 1/2. Isomerase that catalyzes the conversion of deoxy-ribose 1-phosphate (dRib-1-P) and ribose 1-phosphate (Rib-1-P) to deoxy-ribose 5-phosphate (dRib-5-P) and ribose 5-phosphate (Rib-5-P), respectively. This is Phosphopentomutase from Legionella pneumophila (strain Corby).